Consider the following 297-residue polypeptide: Protease HtpX homolog (297 aa).

A run of 2 helical transmembrane segments spans residues 14–34 (IVLL…VGYL) and 38–58 (SLET…IIMV). Histidine 144 provides a ligand contact to Zn(2+). The active site involves glutamate 145. Histidine 148 provides a ligand contact to Zn(2+). 2 helical membrane-spanning segments follow: residues 159–179 (IALA…NWWF) and 199–219 (ILLL…AAAI). Residue glutamate 228 participates in Zn(2+) binding.

It belongs to the peptidase M48B family. Zn(2+) serves as cofactor.

The protein localises to the cell membrane. In Leuconostoc mesenteroides subsp. mesenteroides (strain ATCC 8293 / DSM 20343 / BCRC 11652 / CCM 1803 / JCM 6124 / NCDO 523 / NBRC 100496 / NCIMB 8023 / NCTC 12954 / NRRL B-1118 / 37Y), this protein is Protease HtpX homolog.